A 152-amino-acid polypeptide reads, in one-letter code: UPF0756 membrane protein Helmi_09930 (152 aa).

Helical transmembrane passes span 6–26 (VLLI…TALA), 52–72 (TGLI…KVGL), 75–95 (VLLS…VLAT), 111–131 (IIVG…GIPV), and 132–152 (GPLM…WLSK).

It belongs to the UPF0756 family.

It localises to the cell membrane. The polypeptide is UPF0756 membrane protein Helmi_09930 (Heliobacterium modesticaldum (strain ATCC 51547 / Ice1)).